A 538-amino-acid chain; its full sequence is NADH-quinone oxidoreductase subunit N (538 aa).

14 consecutive transmembrane segments (helical) span residues Ile-12–Leu-32, Leu-47–Ser-67, Pro-81–Ala-101, Gly-144–Phe-164, Leu-170–Leu-190, Tyr-205–Gly-225, Phe-248–Pro-268, Ile-294–Asp-314, Pro-317–Gln-337, Met-343–Asn-363, Leu-371–Val-391, Ala-423–Thr-443, Ser-472–Val-492, and Gly-502–Ala-522.

It belongs to the complex I subunit 2 family. NDH-1 is composed of 14 different subunits. Subunits NuoA, H, J, K, L, M, N constitute the membrane sector of the complex.

Its subcellular location is the cell membrane. The catalysed reaction is a quinone + NADH + 5 H(+)(in) = a quinol + NAD(+) + 4 H(+)(out). NDH-1 shuttles electrons from NADH, via FMN and iron-sulfur (Fe-S) centers, to quinones in the respiratory chain. The immediate electron acceptor for the enzyme in this species is believed to be a menaquinone. Couples the redox reaction to proton translocation (for every two electrons transferred, four hydrogen ions are translocated across the cytoplasmic membrane), and thus conserves the redox energy in a proton gradient. The protein is NADH-quinone oxidoreductase subunit N of Mycobacteroides abscessus (strain ATCC 19977 / DSM 44196 / CCUG 20993 / CIP 104536 / JCM 13569 / NCTC 13031 / TMC 1543 / L948) (Mycobacterium abscessus).